Reading from the N-terminus, the 366-residue chain is Isopropyl malate dehydrogenase htyC (366 aa).

71 to 73 (VGG) serves as a coordination point for NADP(+). 2 residues coordinate substrate: arginine 91 and arginine 130. Aspartate 221, aspartate 246, and aspartate 250 together coordinate Mg(2+). 277 to 282 (GCVHGI) is an NADP(+) binding site.

It belongs to the isocitrate and isopropylmalate dehydrogenases family. In terms of assembly, homodimer. Mg(2+) serves as cofactor. Requires Mn(2+) as cofactor.

The catalysed reaction is (2R,3S)-3-isopropylmalate + NAD(+) = 4-methyl-2-oxopentanoate + CO2 + NADH. It participates in antifungal biosynthesis. Its function is as follows. Isopropyl malate dehydrogenase; part of the gene cluster that mediates the de novo generation of L-homotyrosine from acetyl-CoA and 4-hydroxyphenyl-pyruvate. L-homotyrosine is a building block of echinocandin B, a fungal lipidated cyclic hexapeptide that acts as an antifungal agent. L-homotyrosine 4-hydroxyphenyl-pyruvate first undergoes an aldol-type condensation by htyA with the C-2 of acetyl-CoA followed by the release of CoA to form 2-(4-hydroxybenzyl)-malate. This is followed by isomerization of 2-(4-hydroxy-benzyl)-malate to 3-(4-hydroxybenzyl)-malate by htyD. Thereafter, 3-(4-hydroxybenzyl)-malate undergoes decarboxylation and oxidation to form 2-oxo-4-(4-hydroxybenzyl)butanoic acid, coupled to reduction of NAD(+) to NADH by htyC. The product then undergoes transamination catalyzed by htyB to form L-homotyrosine. The chain is Isopropyl malate dehydrogenase htyC from Aspergillus rugulosus (Emericella rugulosa).